The primary structure comprises 394 residues: Elongation factor Tu (394 aa).

The tr-type G domain maps to 10–205 (KPHMNVGTIG…TMDNYFDLPE (196 aa)). The interval 19–26 (GHVDHGKT) is G1. A GTP-binding site is contributed by 19–26 (GHVDHGKT). Residue Thr26 coordinates Mg(2+). The G2 stretch occupies residues 61 to 65 (GITIN). The tract at residues 82 to 85 (DCPG) is G3. GTP-binding positions include 82–86 (DCPGH) and 137–140 (NKLD). The G4 stretch occupies residues 137-140 (NKLD). Residues 173-175 (SAF) are G5.

It belongs to the TRAFAC class translation factor GTPase superfamily. Classic translation factor GTPase family. EF-Tu/EF-1A subfamily. In terms of assembly, monomer.

It localises to the cytoplasm. It catalyses the reaction GTP + H2O = GDP + phosphate + H(+). GTP hydrolase that promotes the GTP-dependent binding of aminoacyl-tRNA to the A-site of ribosomes during protein biosynthesis. The polypeptide is Elongation factor Tu (Borrelia duttonii (strain Ly)).